The following is a 428-amino-acid chain: Glutamate-1-semialdehyde 2,1-aminomutase (428 aa).

Lysine 267 is subject to N6-(pyridoxal phosphate)lysine.

This sequence belongs to the class-III pyridoxal-phosphate-dependent aminotransferase family. HemL subfamily. As to quaternary structure, homodimer. Requires pyridoxal 5'-phosphate as cofactor.

The protein localises to the cytoplasm. The catalysed reaction is (S)-4-amino-5-oxopentanoate = 5-aminolevulinate. It participates in porphyrin-containing compound metabolism; protoporphyrin-IX biosynthesis; 5-aminolevulinate from L-glutamyl-tRNA(Glu): step 2/2. This chain is Glutamate-1-semialdehyde 2,1-aminomutase, found in Desulforapulum autotrophicum (strain ATCC 43914 / DSM 3382 / VKM B-1955 / HRM2) (Desulfobacterium autotrophicum).